Here is a 317-residue protein sequence, read N- to C-terminus: Ferrochelatase (317 aa).

Residues histidine 192 and glutamate 271 each contribute to the Fe cation site.

Belongs to the ferrochelatase family.

It is found in the cytoplasm. The catalysed reaction is heme b + 2 H(+) = protoporphyrin IX + Fe(2+). The protein operates within porphyrin-containing compound metabolism; protoheme biosynthesis; protoheme from protoporphyrin-IX: step 1/1. Its function is as follows. Catalyzes the ferrous insertion into protoporphyrin IX. The protein is Ferrochelatase of Geobacter metallireducens (strain ATCC 53774 / DSM 7210 / GS-15).